A 239-amino-acid chain; its full sequence is Peptidyl-tRNA hydrolase (239 aa).

TRNA is bound at residue Y14. H19 (proton acceptor) is an active-site residue. Residues F64, N66, and N112 each coordinate tRNA. Residues 199–227 (EKPAQKGRSHIRQARPKAPPAELPSSGPM) form a disordered region. The span at 203–213 (QKGRSHIRQAR) shows a compositional bias: basic residues.

It belongs to the PTH family. In terms of assembly, monomer.

It is found in the cytoplasm. The catalysed reaction is an N-acyl-L-alpha-aminoacyl-tRNA + H2O = an N-acyl-L-amino acid + a tRNA + H(+). Its function is as follows. Hydrolyzes ribosome-free peptidyl-tRNAs (with 1 or more amino acids incorporated), which drop off the ribosome during protein synthesis, or as a result of ribosome stalling. In terms of biological role, catalyzes the release of premature peptidyl moieties from peptidyl-tRNA molecules trapped in stalled 50S ribosomal subunits, and thus maintains levels of free tRNAs and 50S ribosomes. This Chelativorans sp. (strain BNC1) protein is Peptidyl-tRNA hydrolase.